We begin with the raw amino-acid sequence, 812 residues long: Valine--tRNA ligase (812 aa).

The short motif at 47–57 is the 'HIGH' region element; the sequence is PTISGQLHIGH. Positions 536–540 match the 'KMSKS' region motif; that stretch reads KMSKS. Lysine 539 provides a ligand contact to ATP.

The protein belongs to the class-I aminoacyl-tRNA synthetase family. ValS type 2 subfamily. In terms of assembly, monomer.

It is found in the cytoplasm. It catalyses the reaction tRNA(Val) + L-valine + ATP = L-valyl-tRNA(Val) + AMP + diphosphate. In terms of biological role, catalyzes the attachment of valine to tRNA(Val). As ValRS can inadvertently accommodate and process structurally similar amino acids such as threonine, to avoid such errors, it has a 'posttransfer' editing activity that hydrolyzes mischarged Thr-tRNA(Val) in a tRNA-dependent manner. This is Valine--tRNA ligase from Ehrlichia ruminantium (strain Gardel).